The primary structure comprises 492 residues: Probable G-protein coupled receptor Mth-like 8 (492 aa).

Residues 1-21 (MAQFCILGVLLILSGTHCSWG) form the signal peptide. Residues 22 to 218 (FHEETHYPCA…FVLGVREWTY (197 aa)) lie on the Extracellular side of the membrane. 4 disulfides stabilise this stretch: C30/C82, C84/C89, C93/C184, and C94/C107. Residues N37 and N51 are each glycosylated (N-linked (GlcNAc...) asparagine). Residues N129, N169, and N192 are each glycosylated (N-linked (GlcNAc...) asparagine). A helical membrane pass occupies residues 219–239 (AICLLIAILSMFIVLMVYLMC). Residues 240-245 (SEMRNS) lie on the Cytoplasmic side of the membrane. A helical transmembrane segment spans residues 246-266 (FYGVAIKAYAICMILGYALLA). Topologically, residues 267 to 282 (YLTLHNPANLSNAACR) are extracellular. Residue N275 is glycosylated (N-linked (GlcNAc...) asparagine). The helical transmembrane segment at 283-303 (ILPSLALMNLVLSFYILSFIA) threads the bilayer. The Cytoplasmic segment spans residues 304–317 (FKLYLSFYGVVFTK). A helical transmembrane segment spans residues 318–338 (LMFWLIFTPIVLVAVGWSFFV). Over 339–362 (GFSYYGSRLIFGGDTCWFDPRNWS) the chain is Extracellular. The N-linked (GlcNAc...) asparagine glycan is linked to N360. The chain crosses the membrane as a helical span at residues 363–383 (VMIYFYAPVFVACAISGFFYV). At 384–411 (LSQIYIRDQPDIETEKSFESIEKNRFKS) the chain is on the cytoplasmic side. A helical membrane pass occupies residues 412-432 (FWKYFGYTAVVWVVCICSFAF). Residues 433 to 441 (NYYWENRSH) lie on the Extracellular side of the membrane. An N-linked (GlcNAc...) asparagine glycan is attached at N438. Residues 442-462 (LNYAVSFCMAFHGFAALYALI) traverse the membrane as a helical segment. Residues 463-492 (GKNQQIQNFLRRIDNGEDTCENSVPLSSFG) lie on the Cytoplasmic side of the membrane.

The protein belongs to the G-protein coupled receptor 2 family. Mth subfamily.

It localises to the cell membrane. The polypeptide is Probable G-protein coupled receptor Mth-like 8 (mthl8) (Drosophila melanogaster (Fruit fly)).